We begin with the raw amino-acid sequence, 248 residues long: 2-acetamido-2-deoxy-D-galactose-binding seed lectin 2 (248 aa).

N119 carries N-linked (GlcNAc...) asparagine; partial glycosylation. Residues E128 and D130 each contribute to the Mn(2+) site. 4 residues coordinate Ca(2+): D130, Y132, N134, and D138. Residues D138 and H144 each contribute to the Mn(2+) site.

This sequence belongs to the leguminous lectin family.

The sequence is that of 2-acetamido-2-deoxy-D-galactose-binding seed lectin 2 from Cytisus scoparius (Scotch broom).